We begin with the raw amino-acid sequence, 317 residues long: E3 ubiquitin-protein ligase NRDP1 (317 aa).

The RING-type; degenerate zinc finger occupies 18–57; it reads CPICSGVLEEPVQAPHCEHAFCNACITQWFSQQQTCPVDR. The segment at 78-138 adopts an SIAH-type; degenerate zinc-finger fold; it reads KLQIACDNAV…LPNHNCIKHL (61 aa).

In terms of assembly, interacts with USP8, ERBB3, PRKN and BIRC6. Interacts with CSF2RB, EPOR, IL3RA, MYD88 and TBK1. Interacts with Clec16a. Autoubiquitinated. Autoubiquitination leads to proteasomal degradation. Deubiquitinated by USP8 to get stabilized which induces apoptosis.

The enzyme catalyses S-ubiquitinyl-[E2 ubiquitin-conjugating enzyme]-L-cysteine + [acceptor protein]-L-lysine = [E2 ubiquitin-conjugating enzyme]-L-cysteine + N(6)-ubiquitinyl-[acceptor protein]-L-lysine.. Its pathway is protein modification; protein ubiquitination. Its function is as follows. Acts as E3 ubiquitin-protein ligase and regulates the degradation of target proteins. Polyubiquitinates MYD88. Negatively regulates MYD88-dependent production of pro-inflammatory cytokines. Can promote TRIF-dependent production of type I interferon and inhibits infection with vesicular stomatitis virus. Also promotes activation of TBK1 and IRF3. Involved in the ubiquitination of erythropoietin (EPO) and interleukin-3 (IL-3) receptors. Thus, through maintaining basal levels of cytokine receptors, RNF41 is involved in the control of hematopoietic progenitor cell differentiation into myeloerythroid lineages. Contributes to the maintenance of steady-state ERBB3 levels by mediating its growth factor-independent degradation. Involved in the degradation of the inhibitor of apoptosis BIRC6 and thus is an important regulator of cell death by promoting apoptosis. Also acts as a PRKN modifier that accelerates its degradation, resulting in a reduction of PRKN activity, influencing the balance of intracellular redox state. The RNF41-PRKN pathway regulates autophagosome-lysosome fusion during late mitophagy. Mitophagy is a selective form of autophagy necessary for mitochondrial quality control. In Mus musculus (Mouse), this protein is E3 ubiquitin-protein ligase NRDP1 (Rnf41).